Consider the following 156-residue polypeptide: Aspartate 1-decarboxylase (156 aa).

Catalysis depends on S29, which acts as the Schiff-base intermediate with substrate; via pyruvic acid. S29 bears the Pyruvic acid (Ser) mark. T61 serves as a coordination point for substrate. Y62 (proton donor) is an active-site residue. Position 77–79 (77–79 (GAA)) interacts with substrate.

This sequence belongs to the PanD family. As to quaternary structure, heterooctamer of four alpha and four beta subunits. Pyruvate serves as cofactor. Post-translationally, is synthesized initially as an inactive proenzyme, which is activated by self-cleavage at a specific serine bond to produce a beta-subunit with a hydroxyl group at its C-terminus and an alpha-subunit with a pyruvoyl group at its N-terminus.

Its subcellular location is the cytoplasm. The catalysed reaction is L-aspartate + H(+) = beta-alanine + CO2. The protein operates within cofactor biosynthesis; (R)-pantothenate biosynthesis; beta-alanine from L-aspartate: step 1/1. Its function is as follows. Catalyzes the pyruvoyl-dependent decarboxylation of aspartate to produce beta-alanine. This is Aspartate 1-decarboxylase from Rhodopirellula baltica (strain DSM 10527 / NCIMB 13988 / SH1).